Here is a 268-residue protein sequence, read N- to C-terminus: Ribosome maturation factor RimP (268 aa).

Disordered stretches follow at residues 1–41 (MGSA…GRGG) and 223–268 (LVEP…EMTR). Low complexity predominate over residues 32-41 (PSGSARGRGG). Residues 248–257 (ESNDDGREAG) are compositionally biased toward basic and acidic residues.

Belongs to the RimP family.

The protein resides in the cytoplasm. Its function is as follows. Required for maturation of 30S ribosomal subunits. The sequence is that of Ribosome maturation factor RimP from Frankia casuarinae (strain DSM 45818 / CECT 9043 / HFP020203 / CcI3).